Here is a 202-residue protein sequence, read N- to C-terminus: N-(5'-phosphoribosyl)anthranilate isomerase (202 aa).

Belongs to the TrpF family.

The enzyme catalyses N-(5-phospho-beta-D-ribosyl)anthranilate = 1-(2-carboxyphenylamino)-1-deoxy-D-ribulose 5-phosphate. The protein operates within amino-acid biosynthesis; L-tryptophan biosynthesis; L-tryptophan from chorismate: step 3/5. The sequence is that of N-(5'-phosphoribosyl)anthranilate isomerase from Listeria monocytogenes serotype 4b (strain F2365).